The sequence spans 242 residues: 7-cyano-7-deazaguanine synthase (242 aa).

12 to 22 serves as a coordination point for ATP; sequence FSGGQDSATCL. 4 residues coordinate Zn(2+): Cys200, Cys215, Cys218, and Cys221.

The protein belongs to the QueC family. It depends on Zn(2+) as a cofactor.

It catalyses the reaction 7-carboxy-7-deazaguanine + NH4(+) + ATP = 7-cyano-7-deazaguanine + ADP + phosphate + H2O + H(+). It participates in purine metabolism; 7-cyano-7-deazaguanine biosynthesis. In terms of biological role, catalyzes the ATP-dependent conversion of 7-carboxy-7-deazaguanine (CDG) to 7-cyano-7-deazaguanine (preQ(0)). In Gluconobacter oxydans (strain 621H) (Gluconobacter suboxydans), this protein is 7-cyano-7-deazaguanine synthase.